The sequence spans 331 residues: UDP-glucose 4-epimerase (331 aa).

NAD(+) contacts are provided by residues 11–12 (YI), 31–36 (DNLITG), 51–52 (DI), 73–77 (FAAFS), asparagine 92, threonine 117, tyrosine 141, lysine 145, and phenylalanine 169. Residues threonine 117 and tyrosine 141 each contribute to the substrate site. Tyrosine 141 serves as the catalytic Proton acceptor. Substrate is bound by residues asparagine 170, 189–190 (HI), 206–208 (QIY), arginine 221, and 282–285 (RAGD).

The protein belongs to the NAD(P)-dependent epimerase/dehydratase family. As to quaternary structure, homodimer. NAD(+) serves as cofactor.

It catalyses the reaction UDP-alpha-D-glucose = UDP-alpha-D-galactose. Its pathway is carbohydrate metabolism; galactose metabolism. This chain is UDP-glucose 4-epimerase (galE), found in Lacticaseibacillus casei (Lactobacillus casei).